We begin with the raw amino-acid sequence, 64 residues long: Large ribosomal subunit protein bL35 (64 aa).

Positions 1 to 23 (MPKMKTKSGAAKRFKKTANGFKH) are disordered.

It belongs to the bacterial ribosomal protein bL35 family.

The protein is Large ribosomal subunit protein bL35 of Stutzerimonas stutzeri (strain A1501) (Pseudomonas stutzeri).